Reading from the N-terminus, the 379-residue chain is L-lactate dehydrogenase (379 aa).

One can recognise an FMN hydroxy acid dehydrogenase domain in the interval 1-379 (MIISASTDYR…IGRDSLVSLP (379 aa)). Position 24 (tyrosine 24) interacts with substrate. FMN contacts are provided by serine 106 and glutamine 127. Tyrosine 129 lines the substrate pocket. Threonine 155 lines the FMN pocket. Position 164 (arginine 164) interacts with substrate. Residue lysine 251 coordinates FMN. Residue histidine 275 is the Proton acceptor of the active site. Arginine 278 serves as a coordination point for substrate. An FMN-binding site is contributed by 306-330 (DSGIRTGLDVVRMLALGADTVLLGR).

The protein belongs to the FMN-dependent alpha-hydroxy acid dehydrogenase family. Requires FMN as cofactor.

Its subcellular location is the cell inner membrane. It catalyses the reaction (S)-lactate + A = pyruvate + AH2. Its function is as follows. Catalyzes the conversion of L-lactate to pyruvate. Is coupled to the respiratory chain. This Stenotrophomonas maltophilia (strain K279a) protein is L-lactate dehydrogenase.